The chain runs to 214 residues: Nucleoplasmin-2 (214 aa).

The disordered stretch occupies residues 119-214; sequence ERYEASDLTW…ARAKKPGFKK (96 aa). The segment covering 127-155 has biased composition (acidic residues); that stretch reads TWEEEEEEEGEEEEEEEEDDEDEDADISL. The tract at residues 129–152 is acidic tract A2; sequence EEEEEEEGEEEEEEEEDDEDEDAD. The short motif at 165–180 is the Bipartite nuclear localization signal element; sequence KRLVPQKQASVAKKKK. Residues 181–197 are compositionally biased toward basic and acidic residues; the sequence is LEKEEEEIRASVRDKSP. The segment covering 198–214 has biased composition (basic residues); that stretch reads VKKAKATARAKKPGFKK.

It belongs to the nucleoplasmin family. In terms of assembly, homopentamer, when bound to H2A-H2B dimers only. Homodecamer of two stacked pentamers, when bound to H2A-H2B dimers and H3-H4 tetramers simultaneously.

It is found in the nucleus. In terms of biological role, core histones chaperone involved in chromatin reprogramming, specially during fertilization and early embryonic development. Probably involved in sperm DNA decondensation during fertilization. This Homo sapiens (Human) protein is Nucleoplasmin-2 (NPM2).